The following is a 286-amino-acid chain: Oxidase hkm6 (286 aa).

Residues His-16, His-25, and His-215 each contribute to the Cu cation site.

It belongs to the tyrosinase family. Requires Cu(2+) as cofactor.

It functions in the pathway secondary metabolite biosynthesis. Functionally, oxidase; part of the gene cluster that mediates the biosynthesis of hancockiamides, an unusual new family of N-cinnamoylated piperazines. The NRPS hkm10 and the NmrA-like reductase hkm9 are proposed to convert two molecules of L-Phe to the intermediary piperazine called xenocockiamide A. Xenocockiamide A is then converted to hancockiamide D via a series of hydroxylations and O-methylations. The tyrosinase hkm6 may catalyze an aromatic hydroxylation, then the 2-oxoglutarate-dependent Fe(II) dioxygenase hkm4 and the FAD-dependent phenol hydroxylase hkm7 may catalyze consecutive hydroxylations to install 2 more hydroxy groups, and the methyltransferase hkm8 probably catalyzes two methylations using 2 molecules of S-adenosyl-L-methionine (SAM). The NRPS hkm11 activates and transfers trans-cinnamate supplied by the PAL hkm12 to hancockiamide D and produces hancockiamide A. NRPS Hkm11 has the flexibility to tolerate the bulky hancockiamide G as a substrate and the absence of the acetyl-transferase hkm3 opens up the opportunity for hkm11 to introduce a second N-cinnamoyl moiety. The cytochrome P450 monooxygenase hkm5 catalyzes the methylenedioxy bridge formation, converting hancockiamide A into hancockiamide G. Hkm5 can also convert hancockiamide B into hancockiamide C, and hancockiamide D into hancockiamide H. The N-acetyltransferase hkm3 finally transfers an acetyl group to 1-N of piperazine, converting hancockiamide A into hancockiamide B and hancockiamide G into hancockiamide C. This Aspergillus hancockii protein is Oxidase hkm6.